The sequence spans 156 residues: Phosphopantetheine adenylyltransferase (156 aa).

Substrate is bound at residue threonine 10. ATP-binding positions include 10–11 (TF) and histidine 18. Lysine 42, leucine 74, and arginine 88 together coordinate substrate. ATP-binding positions include 89–91 (GLR), glutamate 99, and 124–130 (NAFISSS).

This sequence belongs to the bacterial CoaD family. In terms of assembly, homohexamer. Mg(2+) serves as cofactor.

It is found in the cytoplasm. The enzyme catalyses (R)-4'-phosphopantetheine + ATP + H(+) = 3'-dephospho-CoA + diphosphate. It functions in the pathway cofactor biosynthesis; coenzyme A biosynthesis; CoA from (R)-pantothenate: step 4/5. In terms of biological role, reversibly transfers an adenylyl group from ATP to 4'-phosphopantetheine, yielding dephospho-CoA (dPCoA) and pyrophosphate. This chain is Phosphopantetheine adenylyltransferase, found in Campylobacter curvus (strain 525.92).